The chain runs to 347 residues: Selenide, water dikinase (347 aa).

C17 is an active-site residue. Residues K20 and 48 to 50 (TRD) each bind ATP. D51 contacts Mg(2+). ATP-binding positions include D68, D91, and 139-141 (GHS). D91 is a Mg(2+) binding site. Position 227 (D227) interacts with Mg(2+).

Belongs to the selenophosphate synthase 1 family. Class I subfamily. As to quaternary structure, homodimer. It depends on Mg(2+) as a cofactor.

The catalysed reaction is hydrogenselenide + ATP + H2O = selenophosphate + AMP + phosphate + 2 H(+). Synthesizes selenophosphate from selenide and ATP. This chain is Selenide, water dikinase, found in Salmonella typhi.